The sequence spans 765 residues: E3 ubiquitin-protein ligase SMURF2 (765 aa).

The C2 domain maps to M1–L117. 3 WW domains span residues N157 to R190, P251 to V284, and G297 to L330. A disordered region spans residues S341 to E375. Residues A351 to S369 show a composition bias toward polar residues. The HECT domain maps to R431 to E765. C733 (glycyl thioester intermediate) is an active-site residue.

The protein localises to the nucleus. The protein resides in the cytoplasm. Its subcellular location is the cell membrane. It is found in the membrane raft. It carries out the reaction S-ubiquitinyl-[E2 ubiquitin-conjugating enzyme]-L-cysteine + [acceptor protein]-L-lysine = [E2 ubiquitin-conjugating enzyme]-L-cysteine + N(6)-ubiquitinyl-[acceptor protein]-L-lysine.. The protein operates within protein modification; protein ubiquitination. Its function is as follows. E3 ubiquitin-protein ligase which accepts ubiquitin from an E2 ubiquitin-conjugating enzyme in the form of a thioester and then directly transfers the ubiquitin to targeted substrates. The chain is E3 ubiquitin-protein ligase SMURF2 (smurf2) from Danio rerio (Zebrafish).